Here is a 196-residue protein sequence, read N- to C-terminus: C-type lectin domain family 2 member F (196 aa).

The segment at Met-1 to Lys-21 is disordered. Over Met-1–Cys-41 the chain is Cytoplasmic. A helical; Signal-anchor for type II membrane protein transmembrane segment spans residues Cys-42–Ala-62. The Extracellular segment spans residues Thr-63–Cys-196. Cys-77 and Cys-88 form a disulfide bridge. The C-type lectin domain occupies Val-84–Ser-187. An N-linked (GlcNAc...) asparagine glycan is attached at Asn-97. A disulfide bridge connects residues Cys-105 and Cys-186.

It localises to the cell membrane. In terms of biological role, lectin-type cell surface receptor. In Mus musculus (Mouse), this protein is C-type lectin domain family 2 member F (Clec2f).